A 342-amino-acid polypeptide reads, in one-letter code: ATPase asna-1 (342 aa).

26–33 (KGGVGKTT) contributes to the ATP binding site. The active site involves D55. E243 and N270 together coordinate ATP. The Zn(2+) site is built by C285 and C288.

This sequence belongs to the arsA ATPase family. Homodimer.

It localises to the cytoplasm. Its subcellular location is the endoplasmic reticulum. Its function is as follows. ATPase required for the post-translational delivery of tail-anchored (TA) proteins to the endoplasmic reticulum. Recognizes and selectively binds the transmembrane domain of TA proteins in the cytosol. This complex then targets to the endoplasmic reticulum by membrane-bound receptors, where the tail-anchored protein is released for insertion. This process is regulated by ATP binding and hydrolysis. ATP binding drives the homodimer towards the closed dimer state, facilitating recognition of newly synthesized TA membrane proteins. ATP hydrolysis is required for insertion. Subsequently, the homodimer reverts towards the open dimer state, lowering its affinity for the membrane-bound receptor, and returning it to the cytosol to initiate a new round of targeting. May be involved in insulin signaling. The chain is ATPase asna-1 from Caenorhabditis elegans.